We begin with the raw amino-acid sequence, 483 residues long: HSPB1-associated protein 1 (483 aa).

Positions 1 to 26 (MAAGCEGIAPPTLGERTVGEEGEPVK) are disordered. The interaction with HSPB1 stretch occupies residues 88–208 (ETECSYVDAT…EDTPFLYPTR (121 aa)). One can recognise a JmjC domain in the interval 124–288 (WAYADYKYFV…HLARVEEAIT (165 aa)). The tract at residues 388–416 (LIPVTPASEERGGALEGDSEESVSSNGGH) is disordered.

In terms of assembly, interacts with CRYAB and HSPB1.

It is found in the cytoplasm. In terms of biological role, may play a role in cellular stress response. The sequence is that of HSPB1-associated protein 1 (Hspbap1) from Mus musculus (Mouse).